Reading from the N-terminus, the 543-residue chain is Chaperonin GroEL (543 aa).

ATP contacts are provided by residues 29-32 (TLGP), 86-90 (DGTTT), glycine 413, 476-478 (NAA), and aspartate 492.

This sequence belongs to the chaperonin (HSP60) family. Forms a cylinder of 14 subunits composed of two heptameric rings stacked back-to-back. Interacts with the co-chaperonin GroES.

The protein localises to the cytoplasm. The catalysed reaction is ATP + H2O + a folded polypeptide = ADP + phosphate + an unfolded polypeptide.. In terms of biological role, together with its co-chaperonin GroES, plays an essential role in assisting protein folding. The GroEL-GroES system forms a nano-cage that allows encapsulation of the non-native substrate proteins and provides a physical environment optimized to promote and accelerate protein folding. In Streptococcus pyogenes serotype M18 (strain MGAS8232), this protein is Chaperonin GroEL.